Reading from the N-terminus, the 720-residue chain is Inactive serine protease PAMR1 (720 aa).

Residues 1 to 21 (MELGCWTQLGLTFLQLLLISS) form the signal peptide. 9 disulfide bridges follow: C128-C150, C177-C199, C239-C250, C244-C260, C262-C271, C280-C329, C315-C342, C414-C442, and C489-C505. The region spanning 128 to 236 (CGQVLRAPKG…DGFHAIYEEI (109 aa)) is the CUB domain. The EGF-like domain maps to 235 to 272 (EITACSSSPCFHDGTCVLDKAGSYKCACLAGYTGQRCE). Sushi domains are found at residues 278–344 (RNCS…ICIK) and 387–444 (APTK…SCIP). Positions 445 to 720 (ICGKIENITA…FKDWIERNMK (276 aa)) constitute a Peptidase S1 domain. N614 carries an N-linked (GlcNAc...) asparagine glycan. 2 cysteine pairs are disulfide-bonded: C630-C649 and C661-C697.

It belongs to the peptidase S1 family.

The protein resides in the secreted. May play a role in regeneration of skeletal muscle. This is Inactive serine protease PAMR1 (PAMR1) from Homo sapiens (Human).